The primary structure comprises 689 residues: MGCFESKPSEQHQPTAVRGCTDIFWLVVYILFWIALLVIAVFSFVYGNPLRVINGYDSFGNTCGVSSNEKFSHFPLSGMNTKDKPYVFFLDIKELRQTLKICVKECPKKEIGNAMELYRYYEERDTKYCRYDFNMSLLTAPDASGPKYFAFAGPCPKFPVYESSSVLHRCIPSGKNAPTKVVKDMYALVNSFGAAQQVFSDIYKTWPTVLLLVGLSLIFSIILIMMLHWLTAIISWLICIFVAVASIGITAVLWWSYYKQKHSIDTDTKLSYLEELVRNETTIYVLAILATCIMIILLVVIYYLREKLSGLAALFEEAGKCMLQIPGLAGPPVLAFIALAVFLSFWMVVIVCLATANYPNVKPLLPFTQLKENPNKTEAAIKPDMSVNNNTYKSFDLVEYPEADFLRHMLWIYIIGLVWTSEFIFACQQLVISGAVAYWYFRKPTDTPVLNAIAKLVKYHLGSVAKGSFIITLFKIPRLILTYLYAKLKRHQQEGSECASCCLKCCICSFWLLEKFIRYLNHNAYTVIAIESVNFCPAAKIAWNALVTNALQVATINGIGDLVLFLGKLAVAALCGLISILMLRDNPDVHFYMAPVIIITLFSFFVAHIVLSLYEMVVDTLFLCVCEDRTINGNSGRWKQSNLAHLLGESPEQDAVEAPMQVVELTPITKQPFSVQSLQMTEIDDKGAV.

Residues 23 to 43 form a helical membrane-spanning segment; the sequence is IFWLVVYILFWIALLVIAVFS. The N-linked (GlcNAc...) asparagine glycan is linked to Asn134. The next 2 helical transmembrane spans lie at 199-219 and 233-255; these read FSDI…SLIF and IISW…VLWW. Asn279 is a glycosylation site (N-linked (GlcNAc...) asparagine). A run of 2 helical transmembrane segments spans residues 283–303 and 333–353; these read IYVL…VIYY and VLAF…IVCL. 2 N-linked (GlcNAc...) asparagine glycosylation sites follow: Asn375 and Asn389. 4 helical membrane passes run 412 to 432, 461 to 481, 562 to 582, and 591 to 611; these read IYII…QLVI, LGSV…RLIL, LVLF…SILM, and FYMA…HIVL.

Belongs to the CTL (choline transporter-like) family.

It localises to the membrane. In Aedes aegypti (Yellowfever mosquito), this protein is Choline transporter-like 1.